The sequence spans 335 residues: Fructose-1,6-bisphosphatase class 1 (335 aa).

The Mg(2+) site is built by E90, D113, L115, and D116. Substrate is bound by residues D116 to S119, N209, Y242, and K272. Residue E278 coordinates Mg(2+).

Belongs to the FBPase class 1 family. Homotetramer. It depends on Mg(2+) as a cofactor.

Its subcellular location is the cytoplasm. The catalysed reaction is beta-D-fructose 1,6-bisphosphate + H2O = beta-D-fructose 6-phosphate + phosphate. It functions in the pathway carbohydrate biosynthesis; gluconeogenesis. The protein is Fructose-1,6-bisphosphatase class 1 of Histophilus somni (strain 2336) (Haemophilus somnus).